Reading from the N-terminus, the 332-residue chain is L-lactate dehydrogenase C chain (332 aa).

Ser2 is modified (blocked amino end (Ser)). NAD(+)-binding positions include 29–57 (GNVGMACAISILLKGLADELALVDADTNK) and Arg99. Residues Arg106, Asn138, and Arg169 each contribute to the substrate site. Asn138 serves as a coordination point for NAD(+). His193 serves as the catalytic Proton acceptor. Thr248 is a binding site for substrate.

The protein belongs to the LDH/MDH superfamily. LDH family. Homotetramer. Interacts with RABL2/RABL2A; binds preferentially to GTP-bound RABL2. In terms of tissue distribution, expressed within the midpiece of sperm tail (at protein level).

The protein localises to the cytoplasm. It carries out the reaction (S)-lactate + NAD(+) = pyruvate + NADH + H(+). It participates in fermentation; pyruvate fermentation to lactate; (S)-lactate from pyruvate: step 1/1. Its function is as follows. Possible role in sperm motility. The polypeptide is L-lactate dehydrogenase C chain (Ldhc) (Mus musculus (Mouse)).